Reading from the N-terminus, the 239-residue chain is Ureidoacrylate amidohydrolase RutB (239 aa).

Aspartate 35 functions as the Proton acceptor in the catalytic mechanism. Lysine 144 is an active-site residue. The active-site Nucleophile is the cysteine 177.

It belongs to the isochorismatase family. RutB subfamily.

It catalyses the reaction (Z)-3-ureidoacrylate + H2O + H(+) = (Z)-3-aminoacrylate + NH4(+) + CO2. It carries out the reaction (Z)-3-ureidoacrylate + H2O = (Z)-3-aminoacrylate + carbamate + H(+). The catalysed reaction is (Z)-2-methylureidoacrylate + H2O + H(+) = (Z)-2-methylaminoacrylate + NH4(+) + CO2. In terms of biological role, hydrolyzes ureidoacrylate to form aminoacrylate and carbamate. The carbamate hydrolyzes spontaneously, thereby releasing one of the nitrogen atoms of the pyrimidine ring as ammonia and one of its carbon atoms as CO2. This chain is Ureidoacrylate amidohydrolase RutB, found in Caulobacter segnis (strain ATCC 21756 / DSM 7131 / JCM 7823 / NBRC 15250 / LMG 17158 / TK0059) (Mycoplana segnis).